Consider the following 107-residue polypeptide: Putative regulatory protein BCG9842_A0044 (107 aa).

This sequence belongs to the RemA family.

In Bacillus cereus (strain G9842), this protein is Putative regulatory protein BCG9842_A0044.